Consider the following 245-residue polypeptide: 1-(5-phosphoribosyl)-5-[(5-phosphoribosylamino)methylideneamino] imidazole-4-carboxamide isomerase (245 aa).

The active-site Proton acceptor is the Asp7. The Proton donor role is filled by Asp129.

This sequence belongs to the HisA/HisF family.

The protein resides in the cytoplasm. It catalyses the reaction 1-(5-phospho-beta-D-ribosyl)-5-[(5-phospho-beta-D-ribosylamino)methylideneamino]imidazole-4-carboxamide = 5-[(5-phospho-1-deoxy-D-ribulos-1-ylimino)methylamino]-1-(5-phospho-beta-D-ribosyl)imidazole-4-carboxamide. It functions in the pathway amino-acid biosynthesis; L-histidine biosynthesis; L-histidine from 5-phospho-alpha-D-ribose 1-diphosphate: step 4/9. This is 1-(5-phosphoribosyl)-5-[(5-phosphoribosylamino)methylideneamino] imidazole-4-carboxamide isomerase from Salmonella dublin (strain CT_02021853).